Here is a 572-residue protein sequence, read N- to C-terminus: Solute carrier family 22 member 16 (572 aa).

The helical transmembrane segment at Ile-21–Ser-41 threads the bilayer. The N-linked (GlcNAc...) asparagine glycan is linked to Asn-57. The next 5 helical transmembrane spans lie at Leu-156–Ser-176, Leu-183–Phe-203, Phe-208–Val-228, Ile-244–Val-264, and Trp-268–Leu-288. Asn-315 carries N-linked (GlcNAc...) asparagine glycosylation. 6 helical membrane passes run Thr-359 to Asn-379, Leu-389 to Met-409, Asn-416 to Pro-436, Val-441 to Ile-461, Leu-476 to Ile-496, and Ile-503 to Leu-523. Residue Asn-559 is glycosylated (N-linked (GlcNAc...) asparagine).

This sequence belongs to the major facilitator (TC 2.A.1) superfamily. Organic cation transporter (TC 2.A.1.19) family.

The protein resides in the cell membrane. The catalysed reaction is (R)-carnitine(in) = (R)-carnitine(out). The enzyme catalyses spermidine(in) = spermidine(out). In terms of biological role, facilitative organic cation transporter that mediates the transport of carnitine as well as the polyamine spermidine. Mediates the partially Na(+)-dependent bidirectional transport of carnitine. May mediate L-carnitine secretion from testis epididymal epithelium into the lumen which is involved in the maturation of spermatozoa. The protein is Solute carrier family 22 member 16 (SLC22A16) of Bos taurus (Bovine).